The sequence spans 65 residues: uncharacterized protein (65 aa).

The protein resides in the plastid. Its subcellular location is the chloroplast. This is an uncharacterized protein from Mesostigma viride (Green alga).